The sequence spans 305 residues: Oxygen-dependent coproporphyrinogen-III oxidase (305 aa).

Ser-92 provides a ligand contact to substrate. A divalent metal cation is bound by residues His-96 and His-106. The Proton donor role is filled by His-106. Substrate is bound at residue 108–110 (NVR). The a divalent metal cation site is built by His-145 and His-175. The tract at residues 239 to 274 (YVEFNLLFDRGTLFGLQSGGRAESILISLPPLVRWE) is important for dimerization. 257 to 259 (GGR) is a binding site for substrate.

This sequence belongs to the aerobic coproporphyrinogen-III oxidase family. In terms of assembly, homodimer. Requires a divalent metal cation as cofactor.

Its subcellular location is the cytoplasm. It carries out the reaction coproporphyrinogen III + O2 + 2 H(+) = protoporphyrinogen IX + 2 CO2 + 2 H2O. It participates in porphyrin-containing compound metabolism; protoporphyrin-IX biosynthesis; protoporphyrinogen-IX from coproporphyrinogen-III (O2 route): step 1/1. Functionally, involved in the heme biosynthesis. Catalyzes the aerobic oxidative decarboxylation of propionate groups of rings A and B of coproporphyrinogen-III to yield the vinyl groups in protoporphyrinogen-IX. This is Oxygen-dependent coproporphyrinogen-III oxidase from Xylella fastidiosa (strain M12).